The sequence spans 579 residues: Arginine--tRNA ligase (579 aa).

The short motif at 127 to 137 (ANPTGPLHVGH) is the 'HIGH' region element.

This sequence belongs to the class-I aminoacyl-tRNA synthetase family. In terms of assembly, monomer.

The protein resides in the cytoplasm. It catalyses the reaction tRNA(Arg) + L-arginine + ATP = L-arginyl-tRNA(Arg) + AMP + diphosphate. This is Arginine--tRNA ligase from Acidithiobacillus ferrooxidans (strain ATCC 23270 / DSM 14882 / CIP 104768 / NCIMB 8455) (Ferrobacillus ferrooxidans (strain ATCC 23270)).